The chain runs to 722 residues: Probable tail fiber protein (722 aa).

One can recognise a Peptidase S74 domain in the interval 623 to 719 (SDERLKHSIK…KKVEVLEAKL (97 aa)).

The protein resides in the virion. In terms of biological role, probable tail fiber protein. The sequence is that of Probable tail fiber protein from Escherichia coli (Escherichia coli phage phi32).